Here is a 120-residue protein sequence, read N- to C-terminus: Protein p14.5 (120 aa).

Disordered regions lie at residues 1–27 (MADF…LEYD) and 80–120 (REFT…HKSK). At Ala-2 the chain carries N-acetylalanine; by host. Residues 103–120 (KPKKKKHLFPKLSSHKSK) are compositionally biased toward basic residues.

It belongs to the asfivirus structural protein p14.5 family. In terms of assembly, interacts with the major capsid protein. Interacts with host IRF3; this interaction interferes with the recruitment of IRF3 to TBK1. Post-translationally, acetylated.

It localises to the virion. Its function is as follows. Structural protein required for transport of intracellular particles from the assembly sites to the plasma membrane. Binds to both ssDNA and dsDNA. Suppressed the activation of the cGAS/STING pathway by interfering with the recruitment of IRF3 to TBK1, which in turn suppresses IRF3 phosphorylation, decreasing interferon production. The chain is Protein p14.5 from Ornithodoros (relapsing fever ticks).